The following is a 456-amino-acid chain: Tyrosine phenol-lyase (456 aa).

Position 257 is an N6-(pyridoxal phosphate)lysine (lysine 257).

Belongs to the beta-eliminating lyase family. Homotetramer. It depends on pyridoxal 5'-phosphate as a cofactor.

The catalysed reaction is L-tyrosine + H2O = phenol + pyruvate + NH4(+). This Citrobacter intermedius (Escherichia intermedia) protein is Tyrosine phenol-lyase (tpl).